The sequence spans 899 residues: Tuberous sclerosis 1 protein homolog (899 aa).

2 coiled-coil regions span residues 540 to 706 (LSST…CVNI) and 737 to 847 (SDEQ…ELKN). The disordered stretch occupies residues 874 to 899 (NDSLHPKVGPPRRQSTDTSRSTFRQY). A compositionally biased stretch (polar residues) spans 889-899 (TDTSRSTFRQY).

As to quaternary structure, interacts with tsc2.

Its subcellular location is the cytoplasm. Functionally, together with tsc2, required for uptake of various amino acids from the environment and for proper conjugation. Involved in induction of gene expression of permeases and genes required for meiosis upon nitrogen starvation. May act as a GTPase-activating protein (GAP) for the small GTPase rhb1. This is Tuberous sclerosis 1 protein homolog (tsc1) from Schizosaccharomyces pombe (strain 972 / ATCC 24843) (Fission yeast).